A 425-amino-acid polypeptide reads, in one-letter code: AP-3 complex subunit mu (425 aa).

The MHD domain occupies 175–423 (TNEFFIHVLE…TIIAQNVSFR (249 aa)).

This sequence belongs to the adaptor complexes medium subunit family.

It localises to the cytoplasm. It is found in the cytoskeleton. Its subcellular location is the microtubule organizing center. The protein resides in the spindle pole body. The protein localises to the membrane. It localises to the golgi apparatus. It is found in the cytoplasmic vesicle membrane. Part of the AP-3 complex, an adaptor-related complex which is not clathrin-associated. The complex is associated with the Golgi region as well as more peripheral structures. It facilitates the budding of vesicles from the Golgi membrane and may be directly involved in trafficking to the vacuole. This Schizosaccharomyces pombe (strain 972 / ATCC 24843) (Fission yeast) protein is AP-3 complex subunit mu (apm3).